We begin with the raw amino-acid sequence, 343 residues long: Glyceraldehyde-3-phosphate dehydrogenase (343 aa).

NAD(+) contacts are provided by residues 13–14 and Gly111; that span reads TI. 140–142 contributes to the D-glyceraldehyde 3-phosphate binding site; it reads SCN. Cys141 functions as the Nucleophile in the catalytic mechanism. Arg169 contacts NAD(+). 195–196 is a D-glyceraldehyde 3-phosphate binding site; the sequence is HA. Gln302 contacts NAD(+).

The protein belongs to the glyceraldehyde-3-phosphate dehydrogenase family. As to quaternary structure, homotetramer.

Its subcellular location is the cytoplasm. It catalyses the reaction D-glyceraldehyde 3-phosphate + phosphate + NADP(+) = (2R)-3-phospho-glyceroyl phosphate + NADPH + H(+). The enzyme catalyses D-glyceraldehyde 3-phosphate + phosphate + NAD(+) = (2R)-3-phospho-glyceroyl phosphate + NADH + H(+). The protein operates within carbohydrate degradation; glycolysis; pyruvate from D-glyceraldehyde 3-phosphate: step 1/5. This chain is Glyceraldehyde-3-phosphate dehydrogenase, found in Hyperthermus butylicus (strain DSM 5456 / JCM 9403 / PLM1-5).